The sequence spans 276 residues: Protein MGF 360-15R (276 aa).

The protein belongs to the asfivirus MGF 360 family.

Its function is as follows. Plays a role in virus cell tropism, and may be required for efficient virus replication in macrophages. The protein is Protein MGF 360-15R of African swine fever virus (isolate Tick/South Africa/Pretoriuskop Pr4/1996) (ASFV).